We begin with the raw amino-acid sequence, 272 residues long: uncharacterized protein (272 aa).

2 helical membrane-spanning segments follow: residues 9–29 (GGDIIFLMFTTLAAVSTASEH) and 252–272 (SHISFLVPFFSVILVSLISFI).

It localises to the membrane. This is an uncharacterized protein from Caenorhabditis elegans.